Consider the following 152-residue polypeptide: Antiholin-like protein LrgA (152 aa).

A run of 4 helical transmembrane segments spans residues 23-43 (YSIF…KIIE), 45-65 (FMPI…IALC), 77-97 (VGTA…ISVI), and 108-128 (ILII…TGFS).

The protein belongs to the CidA/LrgA family. LrgA subfamily.

The protein resides in the cell membrane. Its function is as follows. Inhibits the expression or activity of extracellular murein hydrolases by interacting, possibly with LrgB, with the holin-like proteins CidA and/or CidB. The LrgAB and CidAB proteins may affect the proton motive force of the membrane. May be involved in programmed cell death (PCD), possibly triggering PCD in response to antibiotics and environmental stresses. This chain is Antiholin-like protein LrgA, found in Staphylococcus epidermidis (strain ATCC 12228 / FDA PCI 1200).